The chain runs to 193 residues: Ribosome hibernation promotion factor (193 aa).

The protein belongs to the HPF/YfiA ribosome-associated protein family. Long HPF subfamily. Interacts with 100S ribosomes.

Its subcellular location is the cytoplasm. Its function is as follows. Might modulate either transcription and/or translation. Required for dimerization of active 70S ribosomes into 100S ribosomes in stationary phase; 100S ribosomes are translationally inactive and sometimes present during exponential growth. The sequence is that of Ribosome hibernation promotion factor from Picosynechococcus sp. (strain ATCC 27264 / PCC 7002 / PR-6) (Agmenellum quadruplicatum).